We begin with the raw amino-acid sequence, 451 residues long: 3-phosphoshikimate 1-carboxyvinyltransferase (451 aa).

Positions 28, 29, and 33 each coordinate 3-phosphoshikimate. Residue Lys28 coordinates phosphoenolpyruvate. Positions 105 and 133 each coordinate phosphoenolpyruvate. 3-phosphoshikimate is bound by residues Ser178, Gln180, Asp331, and Lys358. Gln180 provides a ligand contact to phosphoenolpyruvate. Asp331 (proton acceptor) is an active-site residue. Phosphoenolpyruvate contacts are provided by Arg362 and Arg406.

Belongs to the EPSP synthase family. In terms of assembly, monomer.

The protein resides in the cytoplasm. It catalyses the reaction 3-phosphoshikimate + phosphoenolpyruvate = 5-O-(1-carboxyvinyl)-3-phosphoshikimate + phosphate. It participates in metabolic intermediate biosynthesis; chorismate biosynthesis; chorismate from D-erythrose 4-phosphate and phosphoenolpyruvate: step 6/7. In terms of biological role, catalyzes the transfer of the enolpyruvyl moiety of phosphoenolpyruvate (PEP) to the 5-hydroxyl of shikimate-3-phosphate (S3P) to produce enolpyruvyl shikimate-3-phosphate and inorganic phosphate. The chain is 3-phosphoshikimate 1-carboxyvinyltransferase from Rhodospirillum rubrum (strain ATCC 11170 / ATH 1.1.1 / DSM 467 / LMG 4362 / NCIMB 8255 / S1).